The sequence spans 130 residues: Small ribosomal subunit protein uS8A (130 aa).

It belongs to the universal ribosomal protein uS8 family. As to quaternary structure, component of the small ribosomal subunit (SSU). Mature yeast ribosomes consist of a small (40S) and a large (60S) subunit. The 40S small subunit contains 1 molecule of ribosomal RNA (18S rRNA) and 33 different proteins (encoded by 57 genes). The large 60S subunit contains 3 rRNA molecules (25S, 5.8S and 5S rRNA) and 46 different proteins (encoded by 81 genes).

The protein resides in the cytoplasm. Functionally, component of the ribosome, a large ribonucleoprotein complex responsible for the synthesis of proteins in the cell. The small ribosomal subunit (SSU) binds messenger RNAs (mRNAs) and translates the encoded message by selecting cognate aminoacyl-transfer RNA (tRNA) molecules. The large subunit (LSU) contains the ribosomal catalytic site termed the peptidyl transferase center (PTC), which catalyzes the formation of peptide bonds, thereby polymerizing the amino acids delivered by tRNAs into a polypeptide chain. The nascent polypeptides leave the ribosome through a tunnel in the LSU and interact with protein factors that function in enzymatic processing, targeting, and the membrane insertion of nascent chains at the exit of the ribosomal tunnel. This chain is Small ribosomal subunit protein uS8A, found in Saccharomyces cerevisiae (strain ATCC 204508 / S288c) (Baker's yeast).